A 375-amino-acid polypeptide reads, in one-letter code: Homoserine O-succinyltransferase (375 aa).

The region spanning 48–358 (NAVLVCHALS…PAGHDSFLLD (311 aa)) is the AB hydrolase-1 domain. The active-site Nucleophile is the Ser-154. Residue Arg-224 participates in substrate binding. Catalysis depends on residues Asp-319 and His-352. A substrate-binding site is contributed by Asp-353.

It belongs to the AB hydrolase superfamily. MetX family. In terms of assembly, homodimer.

It is found in the cytoplasm. It catalyses the reaction L-homoserine + succinyl-CoA = O-succinyl-L-homoserine + CoA. The protein operates within amino-acid biosynthesis; L-methionine biosynthesis via de novo pathway; O-succinyl-L-homoserine from L-homoserine: step 1/1. Transfers a succinyl group from succinyl-CoA to L-homoserine, forming succinyl-L-homoserine. This Azoarcus sp. (strain BH72) protein is Homoserine O-succinyltransferase.